A 736-amino-acid chain; its full sequence is DEAD-box ATP-dependent RNA helicase 21 (736 aa).

A coiled-coil region spans residues 14 to 38 (LTREEREKLALERRQAAVTDQRRSA). A compositionally biased stretch (basic and acidic residues) spans 25 to 38 (ERRQAAVTDQRRSA). Disordered stretches follow at residues 25 to 178 (ERRQ…PKKR) and 231 to 263 (KVAA…DKKE). A compositionally biased stretch (pro residues) spans 46 to 58 (PRPPPPPPPPLSN). Basic and acidic residues-rich tracts occupy residues 64-166 (SSSH…DAIK) and 231-252 (KVAA…GLDD). A coiled-coil region spans residues 137-167 (DRDRERGDREKDRLEKMAEREREKELDAIKE). Positions 315–343 (RKWSESKLGTELLRAVEKAGYKEPSPIQM) match the Q motif motif. The Helicase ATP-binding domain maps to 346-541 (IPLGLQQRDV…RKYLRNPVVV (196 aa)). 359 to 366 (AETGSGKT) is an ATP binding site. The DEAD box signature appears at 472-475 (DEAD). The Helicase C-terminal domain occupies 568-712 (RLQKILTDLG…PVPPELARHE (145 aa)). The segment at 704–736 (VPPELARHEASKFKPGSVPDRPPRRNDTVYATH) is disordered.

It belongs to the DEAD box helicase family. DDX23/PRP28 subfamily.

The protein resides in the cytoplasm. The protein localises to the nucleus. The catalysed reaction is ATP + H2O = ADP + phosphate + H(+). ATP-dependent RNA helicase involved in mRNA splicing. May destabilize the U1/5'-splice site duplex to permit an effective competition for the 5'-splice site by the U6 snRNA, resulting in the switch between U1 and U6 at the 5'-splice site. May also act to unwind the U4/U6 base-pairing interaction in the U4/U6/U5 snRNP, facilitating the first covalent step of splicing. This chain is DEAD-box ATP-dependent RNA helicase 21, found in Oryza sativa subsp. japonica (Rice).